The primary structure comprises 563 residues: Pre-hexon-linking protein IIIa (563 aa).

The segment at 1-117 is peripentonal hexon-tethering domain; that stretch reads MRKRRTLTAP…ALLHRVSKYN (117 aa). The interval 148-261 is binding to hexon-linking protein; that stretch reads GSLTALNSFL…FTDSVSISRD (114 aa). Ser235 carries the phosphoserine; by host modification. Thr284 carries the phosphothreonine; by host modification. The segment at 449–472 is disordered; it reads RTESRSVSRVPTPASSRRSSVAMA. Phosphoserine; by host is present on residues Ser452 and Ser456. Residues 462 to 472 are compositionally biased toward low complexity; it reads ASSRRSSVAMA. Phosphoserine; by host is present on residues Ser475 and Ser486. A disordered region spans residues 522 to 543; that stretch reads KYSSAISSDESDDGMSKPDKFL. The propeptide occupies 549 to 563; that stretch reads GNPFAHLRPKLGRCL.

This sequence belongs to the adenoviridae hexon-linking protein IIIa family. In terms of assembly, interacts with hexon proteins; this interaction tethers the peripentonal hexons to hexons situated in the facet. Interacts with the penton protein (via N-terminus). Interacts with packaging protein 3; this interaction is required to promote correct genome packaging. In terms of processing, cleaved near the C-terminus by the viral protease during virion maturation to form the mature protein.

It is found in the virion. The protein localises to the host nucleus. Structural component of the virion that acts as a cement protein on the capsid exterior which mediates the interactions between the hexons, including the peripentonal hexons, and reaches all the way to the penton vertices. Two hexon linking proteins IIIa, one from each facet, stabilize the unique edge interface between a pair of facets. As the virus enters the host cell, hexon linking proteins IIIa are shed concomitant with virion acidification in the endosome. During virus assembly, seems to play a role in the serotype specificity of the packaging of viral DNA via its interaction with packaging protein 3. This is Pre-hexon-linking protein IIIa from Canis lupus familiaris (Dog).